Reading from the N-terminus, the 149-residue chain is Cytochrome c-type biogenesis protein CcmE (149 aa).

Residues methionine 1–lysine 7 lie on the Cytoplasmic side of the membrane. The chain crosses the membrane as a helical; Signal-anchor for type II membrane protein span at residues methionine 8–alanine 28. Topologically, residues phenylalanine 29 to glutamine 149 are periplasmic. Residues histidine 123 and tyrosine 127 each coordinate heme.

This sequence belongs to the CcmE/CycJ family.

Its subcellular location is the cell inner membrane. Functionally, heme chaperone required for the biogenesis of c-type cytochromes. Transiently binds heme delivered by CcmC and transfers the heme to apo-cytochromes in a process facilitated by CcmF and CcmH. In Nitrosomonas europaea (strain ATCC 19718 / CIP 103999 / KCTC 2705 / NBRC 14298), this protein is Cytochrome c-type biogenesis protein CcmE.